Here is a 160-residue protein sequence, read N- to C-terminus: UPF0225 protein CGSHiGG_04185 (160 aa).

It belongs to the UPF0225 family.

This chain is UPF0225 protein CGSHiGG_04185, found in Haemophilus influenzae (strain PittGG).